A 224-amino-acid polypeptide reads, in one-letter code: UPF0758 protein Psyr_0222 (224 aa).

One can recognise an MPN domain in the interval 102–224 (ALENPTQVRS…PLSMVERGLM (123 aa)). Zn(2+) is bound by residues histidine 173, histidine 175, and aspartate 186. A JAMM motif motif is present at residues 173 to 186 (HNHPSGITTPSRSD).

Belongs to the UPF0758 family.

This Pseudomonas syringae pv. syringae (strain B728a) protein is UPF0758 protein Psyr_0222.